The primary structure comprises 424 residues: Putative ankyrin repeat protein R858 (424 aa).

ANK repeat units lie at residues 115-144 (HLMC…FTKR), 147-177 (TDHT…SDYF), 184-215 (INDS…SINY), and 219-252 (TGST…DIHE).

This chain is Putative ankyrin repeat protein R858, found in Acanthamoeba polyphaga (Amoeba).